Reading from the N-terminus, the 231-residue chain is Large ribosomal subunit protein uL1 (231 aa).

It belongs to the universal ribosomal protein uL1 family. Part of the 50S ribosomal subunit.

Functionally, binds directly to 23S rRNA. The L1 stalk is quite mobile in the ribosome, and is involved in E site tRNA release. In terms of biological role, protein L1 is also a translational repressor protein, it controls the translation of the L11 operon by binding to its mRNA. The sequence is that of Large ribosomal subunit protein uL1 from Ralstonia pickettii (strain 12J).